A 221-amino-acid polypeptide reads, in one-letter code: Molybdenum cofactor guanylyltransferase (221 aa).

GTP contacts are provided by residues 18 to 20 (IAG), lysine 35, asparagine 63, aspartate 81, and aspartate 112. Residue aspartate 112 coordinates Mg(2+).

It belongs to the MobA family. Monomer. Requires Mg(2+) as cofactor.

Its subcellular location is the cytoplasm. It carries out the reaction Mo-molybdopterin + GTP + H(+) = Mo-molybdopterin guanine dinucleotide + diphosphate. Its function is as follows. Transfers a GMP moiety from GTP to Mo-molybdopterin (Mo-MPT) cofactor (Moco or molybdenum cofactor) to form Mo-molybdopterin guanine dinucleotide (Mo-MGD) cofactor. The chain is Molybdenum cofactor guanylyltransferase from Brucella abortus (strain S19).